A 136-amino-acid chain; its full sequence is Large ribosomal subunit protein uL16c (136 aa).

This sequence belongs to the universal ribosomal protein uL16 family. In terms of assembly, part of the 50S ribosomal subunit.

The protein localises to the plastid. Its subcellular location is the chloroplast. This Mesostigma viride (Green alga) protein is Large ribosomal subunit protein uL16c.